The sequence spans 506 residues: Alpha-ketoglutarate-dependent dioxygenase FTO (506 aa).

A Phosphothreonine modification is found at Thr4. The segment at 32–326 (TPKDDEFYQQ…SSTHRVAECS (295 aa)) is fe2OG dioxygenase domain. Residues Arg96 and Tyr108 each contribute to the substrate site. Asn204 provides a ligand contact to 2-oxoglutarate. The loop L1; predicted to block binding of double-stranded DNA or RNA stretch occupies residues 212-223 (PYLKEEPYFGMG). Position 215 is an N6-acetyllysine (Lys215). Fe cation-binding residues include His230 and Asp232. Position 230–233 (230–233 (HHDE)) interacts with substrate. Tyr294 lines the 2-oxoglutarate pocket. His306 contributes to the Fe cation binding site. Residues 315–317 (RFS), Thr319, and Arg321 contribute to the 2-oxoglutarate site.

The protein belongs to the fto family. As to quaternary structure, monomer. May also exist as homodimer. Requires Fe(2+) as cofactor.

The protein localises to the nucleus. Its subcellular location is the nucleus speckle. It is found in the cytoplasm. The enzyme catalyses a 5'-end (N(7)-methyl 5'-triphosphoguanosine)-(N(6),2'-O-dimethyladenosine) in mRNA + 2-oxoglutarate + O2 = a 5'-end (N(7)-methyl 5'-triphosphoguanosine)-(2'-O-methyladenosine) in mRNA + formaldehyde + succinate + CO2. It carries out the reaction an N(6)-methyladenosine in mRNA + 2-oxoglutarate + O2 = an adenosine in mRNA + formaldehyde + succinate + CO2. It catalyses the reaction N(6)-methyladenosine in U6 snRNA + 2-oxoglutarate + O2 = adenosine in U6 snRNA + formaldehyde + succinate + CO2. The catalysed reaction is a 5'-end (N(7)-methyl 5'-triphosphoguanosine)-(N(6),2'-O-dimethyladenosine) in U6 snRNA + 2-oxoglutarate + O2 = a 5'-end (N(7)-methyl 5'-triphosphoguanosine)-(2'-O-methyladenosine) in U6 snRNA + formaldehyde + succinate + CO2. The enzyme catalyses an N(1)-methyladenosine in tRNA + 2-oxoglutarate + O2 = an adenosine in tRNA + formaldehyde + succinate + CO2. Functionally, RNA demethylase that mediates oxidative demethylation of different RNA species, such as mRNAs, tRNAs and snRNAs, and acts as a regulator of fat mass, adipogenesis and energy homeostasis. Specifically demethylates N(6)-methyladenosine (m6A) RNA, the most prevalent internal modification of messenger RNA (mRNA) in higher eukaryotes. M6A demethylation by FTO affects mRNA expression and stability. Also able to demethylate m6A in U6 small nuclear RNA (snRNA). Mediates demethylation of N(6),2'-O-dimethyladenosine cap (m6A(m)), by demethylating the N(6)-methyladenosine at the second transcribed position of mRNAs and U6 snRNA. Demethylation of m6A(m) in the 5'-cap by FTO affects mRNA stability by promoting susceptibility to decapping. Also acts as a tRNA demethylase by removing N(1)-methyladenine from various tRNAs. Has no activity towards 1-methylguanine. Has no detectable activity towards double-stranded DNA. Also able to repair alkylated DNA and RNA by oxidative demethylation: demethylates single-stranded RNA containing 3-methyluracil, single-stranded DNA containing 3-methylthymine and has low demethylase activity towards single-stranded DNA containing 1-methyladenine or 3-methylcytosine. Ability to repair alkylated DNA and RNA is however unsure in vivo. Involved in the regulation of fat mass, adipogenesis and body weight, thereby contributing to the regulation of body size and body fat accumulation. Involved in the regulation of thermogenesis and the control of adipocyte differentiation into brown or white fat cells. Regulates activity of the dopaminergic midbrain circuitry via its ability to demethylate m6A in mRNAs. Plays an oncogenic role in a number of acute myeloid leukemias by enhancing leukemic oncogene-mediated cell transformation: acts by mediating m6A demethylation of target transcripts such as MYC, CEBPA, ASB2 and RARA, leading to promote their expression. The protein is Alpha-ketoglutarate-dependent dioxygenase FTO (FTO) of Canis lupus familiaris (Dog).